Consider the following 147-residue polypeptide: Ponticulin-like protein C1 (147 aa).

The N-terminal stretch at 1–20 (MKFTKSLLLLIVAVFASSNA) is a signal peptide. Residue Asn118 is the site of GPI-like-anchor amidated asparagine attachment. Asn118 carries an N-linked (GlcNAc...) asparagine glycan. Positions 119–147 (SSESDSSDSTRIGASFALAASVLLSMLAI) are cleaved as a propeptide — removed in mature form.

Belongs to the ponticulin family. In terms of processing, the GPI-like-anchor contains a phosphoceramide group, rather than a phosphatidyl group.

The protein resides in the cell membrane. This chain is Ponticulin-like protein C1 (ponC1), found in Dictyostelium discoideum (Social amoeba).